Here is a 258-residue protein sequence, read N- to C-terminus: Imidazole glycerol phosphate synthase subunit HisF (258 aa).

Catalysis depends on residues Asp11 and Asp130.

This sequence belongs to the HisA/HisF family. As to quaternary structure, heterodimer of HisH and HisF.

Its subcellular location is the cytoplasm. It carries out the reaction 5-[(5-phospho-1-deoxy-D-ribulos-1-ylimino)methylamino]-1-(5-phospho-beta-D-ribosyl)imidazole-4-carboxamide + L-glutamine = D-erythro-1-(imidazol-4-yl)glycerol 3-phosphate + 5-amino-1-(5-phospho-beta-D-ribosyl)imidazole-4-carboxamide + L-glutamate + H(+). It functions in the pathway amino-acid biosynthesis; L-histidine biosynthesis; L-histidine from 5-phospho-alpha-D-ribose 1-diphosphate: step 5/9. In terms of biological role, IGPS catalyzes the conversion of PRFAR and glutamine to IGP, AICAR and glutamate. The HisF subunit catalyzes the cyclization activity that produces IGP and AICAR from PRFAR using the ammonia provided by the HisH subunit. The sequence is that of Imidazole glycerol phosphate synthase subunit HisF from Synechococcus sp. (strain CC9902).